A 170-amino-acid polypeptide reads, in one-letter code: Transcription factor E (170 aa).

Residues 1 to 93 (MKEAYLYIVE…TWYVDDDVIR (93 aa)) form the HTH TFE/IIEalpha-type domain.

Belongs to the TFE family. Monomer. Interaction with RNA polymerase subunits RpoF and RpoE is necessary for Tfe stimulatory transcription activity. Able to interact with Tbp and RNA polymerase in the absence of DNA promoter. Interacts both with the preinitiation and elongation complexes.

In terms of biological role, transcription factor that plays a role in the activation of archaeal genes transcribed by RNA polymerase. Facilitates transcription initiation by enhancing TATA-box recognition by TATA-box-binding protein (Tbp), and transcription factor B (Tfb) and RNA polymerase recruitment. Not absolutely required for transcription in vitro, but particularly important in cases where Tbp or Tfb function is not optimal. It dynamically alters the nucleic acid-binding properties of RNA polymerases by stabilizing the initiation complex and destabilizing elongation complexes. Seems to translocate with the RNA polymerase following initiation and acts by binding to the non template strand of the transcription bubble in elongation complexes. In Pyrobaculum neutrophilum (strain DSM 2338 / JCM 9278 / NBRC 100436 / V24Sta) (Thermoproteus neutrophilus), this protein is Transcription factor E.